Consider the following 196-residue polypeptide: dCTP deaminase, dUMP-forming (196 aa).

DCTP contacts are provided by residues 101–106, D119, 127–129, Q148, Y162, and Q174; these read KSSLGR and TLE. E129 functions as the Proton donor/acceptor in the catalytic mechanism.

It belongs to the dCTP deaminase family. In terms of assembly, homotrimer.

It catalyses the reaction dCTP + 2 H2O = dUMP + NH4(+) + diphosphate. It functions in the pathway pyrimidine metabolism; dUMP biosynthesis; dUMP from dCTP: step 1/1. Functionally, bifunctional enzyme that catalyzes both the deamination of dCTP to dUTP and the hydrolysis of dUTP to dUMP without releasing the toxic dUTP intermediate. The protein is dCTP deaminase, dUMP-forming of Tropheryma whipplei (strain TW08/27) (Whipple's bacillus).